The following is a 304-amino-acid chain: DCN1-like protein 3 (304 aa).

2 disordered regions span residues 1–86 (MGQC…AEES) and 284–304 (EGEG…EEQT). The N-myristoyl glycine moiety is linked to residue Gly-2. Residues 86–278 (SSLQRLEELF…LFDTFVEWEM (193 aa)) form the DCUN1 domain.

In terms of assembly, part of a complex containing DCUN1D3, CUL3 and RBX1. Interacts (via the DCUN1 domain) with the unneddylated cullins: interacts with CUL1, CUL2, CUL3, CUL4A, CUL4B and CUL5; these interactions promote the cullin neddylation and the identity of the cullin dictates the affinity of the interaction. Interacts preferentially with CUL3; this interaction triggers the relocalization of CUL3 to the cell membrane where CUL3 is neddylated. Interacts (via DCUN1 domain) with RBX1. May also interact with regulators or subunits of cullin-RING ligases such as RNF7, ELOB and DDB1; these interactions are bridged by cullins. Interacts (via DCUN1 domain) with CAND1; this interaction is bridged by cullins and strongly inhibits cullin neddylation. These CAND-cullin-DCNL complexes can only be neddylated in the presence of a substrate adapter. Interacts (via DCUN1 domain) with the N-terminally acetylated form of UBE2M and UBE2F.

It localises to the cell membrane. Its subcellular location is the cytoplasm. It is found in the nucleus. The protein localises to the perinuclear region. Its function is as follows. Contributes to the neddylation of all cullins by transferring NEDD8 from N-terminally acetylated NEDD8-conjugating E2s enzyme to different cullin C-terminal domain-RBX complexes and may play a role in the cell cycle progression by regulating the SCF ubiquitin E3 ligase complex, after UV damage. At the cell membrane, can promote and as well inhibit cullins neddylation. This chain is DCN1-like protein 3, found in Pongo abelii (Sumatran orangutan).